The sequence spans 275 residues: MASSTVSVVLSLFLLLLTQAYSADIQSFSFKNFNSSSFILQGDATVSSSKLRLTKVKGNGLPTLSSLGRAFYSSPIQIYDKSTGAVASWATSFTANIFAPNKSSSADGIAFALVPVGSEPKSNSGFLGVFDSDVYDNSAQTVAVEFDTFSNTDWDPTSRHIGIDVNSIKSIRTASWGLANGQNAEILITYNAATSLLVASLVHPSRRTSYIVSERVDITNELPEYVSIGFSATTGLSEGYTETHDVLSWSFASKLPDDSTTEPLDIASYLVRNVL.

An N-terminal signal peptide occupies residues 1–22 (MASSTVSVVLSLFLLLLTQAYS). Residues asparagine 34 and asparagine 101 are each glycosylated (N-linked (GlcNAc...) asparagine).

The protein belongs to the leguminous lectin family. In terms of assembly, heterodimer, composed of an alpha and a beta subunit derived from a single precursor. Leu-264 is missing in a major portion of the beta subunit, suggesting an origin by sequential removal of amino acids rather than a processing by endoproteolytic cleavage.

Its function is as follows. Metalloglycoprotein, containing Ca, Mg, Mn, and Zn and the carbohydrates galactose, glucosamine, mannose, and fucose. It agglutinates erythrocytes of blood group A1. The protein is Lectin DB58 of Vigna unguiculata subsp. cylindrica (Horse gram).